We begin with the raw amino-acid sequence, 133 residues long: Nodulation protein K (133 aa).

This chain is Nodulation protein K (nodK), found in Bradyrhizobium elkanii.